The following is a 152-amino-acid chain: Neuropeptide W (152 aa).

The N-terminal stretch at 1-32 (MGARGPGPGATARRRLLALLLLLLLLPLPARA) is a signal peptide. The propeptide occupies 65-152 (ALRPAAGPLA…LGASSWTSAE (88 aa)). 2 disordered regions span residues 79–108 (GQDVPPRGPSARNALSPGPAPRDAPLLPPG) and 122–152 (SGIPVSAPRSPRARGSEPQPELGASSWTSAE). Residues 96 to 106 (GPAPRDAPLLP) are compositionally biased toward pro residues.

This sequence belongs to the neuropeptide B/W family.

It is found in the secreted. In terms of biological role, plays a regulatory role in the organization of neuroendocrine signals accessing the anterior pituitary gland. Stimulates water drinking and food intake. May play a role in the hypothalamic response to stress. The chain is Neuropeptide W (NPW) from Sus scrofa (Pig).